The following is a 188-amino-acid chain: MVNVNNFKNGITFQEEDEIFSVIEAQHSKQGRGQASVKAKVKNLRTGAITIKSYTGGDKVKKAHIEKIEMNFLYDEGENIVLMDNATYEQISIPKTRVEWEMNFLVEGAKVHIRKFADEILDIEIPVNIELKVIDAPEAVKGNTSSNPQKKVKVETGFELETPLFIKEGEIIIVSSETGKYMGKGNNK.

The protein belongs to the elongation factor P family.

It is found in the cytoplasm. Its pathway is protein biosynthesis; polypeptide chain elongation. Involved in peptide bond synthesis. Stimulates efficient translation and peptide-bond synthesis on native or reconstituted 70S ribosomes in vitro. Probably functions indirectly by altering the affinity of the ribosome for aminoacyl-tRNA, thus increasing their reactivity as acceptors for peptidyl transferase. The protein is Elongation factor P of Mycoplasma mobile (strain ATCC 43663 / 163K / NCTC 11711) (Mesomycoplasma mobile).